Reading from the N-terminus, the 104-residue chain is Large ribosomal subunit protein uL23 (104 aa).

The protein belongs to the universal ribosomal protein uL23 family. As to quaternary structure, part of the 50S ribosomal subunit. Contacts protein L29, and trigger factor when it is bound to the ribosome.

One of the early assembly proteins it binds 23S rRNA. One of the proteins that surrounds the polypeptide exit tunnel on the outside of the ribosome. Forms the main docking site for trigger factor binding to the ribosome. The chain is Large ribosomal subunit protein uL23 from Paraburkholderia phymatum (strain DSM 17167 / CIP 108236 / LMG 21445 / STM815) (Burkholderia phymatum).